Consider the following 359-residue polypeptide: Protein trichome birefringence-like 42 (359 aa).

The chain crosses the membrane as a helical; Signal-anchor for type II membrane protein span at residues 7–25; sequence LFLLLLIFLVDLSDYGVLA. Positions 110 to 112 match the GDS motif motif; sequence GDS. Positions 335 to 349 match the DCXHWCLPGXXDXWN motif motif; sequence DCSHWCLPGVPDAWN.

This sequence belongs to the PC-esterase family. TBL subfamily.

The protein localises to the membrane. May act as a bridging protein that binds pectin and other cell wall polysaccharides. Probably involved in maintaining esterification of pectins. May be involved in the specific O-acetylation of cell wall polymers. This is Protein trichome birefringence-like 42 (TBL42) from Arabidopsis thaliana (Mouse-ear cress).